The chain runs to 411 residues: Arginine deiminase (411 aa).

Cys-399 serves as the catalytic Amidino-cysteine intermediate.

The protein belongs to the arginine deiminase family.

It localises to the cytoplasm. It catalyses the reaction L-arginine + H2O = L-citrulline + NH4(+). It participates in amino-acid degradation; L-arginine degradation via ADI pathway; carbamoyl phosphate from L-arginine: step 1/2. This is Arginine deiminase from Latilactobacillus sakei subsp. sakei (strain 23K) (Lactobacillus sakei subsp. sakei).